We begin with the raw amino-acid sequence, 264 residues long: Lysosomal-associated transmembrane protein 5 (264 aa).

Helical transmembrane passes span 19-39, 64-84, 92-112, 136-156, and 186-206; these read IATT…FIEH, VSSF…LVGV, LLPF…TLMG, VPLM…LCSS, and FIKI…LKVY. Tyr-261 carries the post-translational modification Phosphotyrosine.

This sequence belongs to the LAPTM4/LAPTM5 transporter family. As to quaternary structure, binds to ubiquitin.

It is found in the lysosome membrane. May have a special functional role during embryogenesis and in adult hematopoietic cells. The chain is Lysosomal-associated transmembrane protein 5 (LAPTM5) from Bos taurus (Bovine).